The following is a 321-amino-acid chain: Ras association domain-containing protein 4 (321 aa).

Residues 79–159 (HLPSTSWMPR…RPKCRAPGEA (81 aa)) are disordered. Over residues 98–110 (SPQNGNITAQGPS) the composition is skewed to polar residues. Position 141 is a phosphoserine (S141). A Ras-associating domain is found at 174-262 (YNHKTSVFTP…ARIFLMEADL (89 aa)). The SARAH domain maps to 270 to 317 (VAQYIKFEMPVLDSFVEKLKEEEEREIIKLTMKFQALRLTMLQRLEQL).

As to quaternary structure, interacts directly with activated KRAS in a GTP-dependent manner. In terms of tissue distribution, widely expressed. Frequently down-regulated in tumor cell lines.

In terms of biological role, potential tumor suppressor. May act as a KRAS effector protein. May promote apoptosis and cell cycle arrest. In Homo sapiens (Human), this protein is Ras association domain-containing protein 4 (RASSF4).